Consider the following 405-residue polypeptide: Solute carrier family 35 member E2B (405 aa).

The interval Met-1–Ser-28 is disordered. 10 consecutive transmembrane segments (helical) span residues Leu-81–Gly-101, Met-106–Pro-126, Phe-142–Val-162, Val-167–Ser-187, Thr-195–Ala-215, Ser-219–Phe-241, Ala-264–Gly-284, Val-296–Ala-316, Phe-326–Gly-346, and Asn-347–Tyr-367. Residues Ser-380–Pro-405 form a disordered region.

Belongs to the TPT transporter family. SLC35E subfamily.

Its subcellular location is the membrane. Putative transporter. The polypeptide is Solute carrier family 35 member E2B (SLC35E2B) (Homo sapiens (Human)).